The sequence spans 361 residues: Peptide chain release factor 1 (361 aa).

Q237 carries the post-translational modification N5-methylglutamine. The tract at residues K287–S306 is disordered.

It belongs to the prokaryotic/mitochondrial release factor family. Post-translationally, methylated by PrmC. Methylation increases the termination efficiency of RF1.

The protein resides in the cytoplasm. Functionally, peptide chain release factor 1 directs the termination of translation in response to the peptide chain termination codons UAG and UAA. This is Peptide chain release factor 1 from Alteromonas mediterranea (strain DSM 17117 / CIP 110805 / LMG 28347 / Deep ecotype).